A 484-amino-acid polypeptide reads, in one-letter code: EF-hand calcium-binding domain-containing protein 14 (484 aa).

3 disordered regions span residues 1–48 (MKKR…TDEE), 227–255 (GSME…HSES), and 313–395 (EQRT…FTSD). Acidic residues predominate over residues 37-48 (PDSDSESSTDEE). Polar residues-rich tracts occupy residues 228-239 (SMENNGSNQILP), 315-324 (RTNVSSSTME), and 335-347 (LVTN…QAQS). EF-hand domains are found at residues 423 to 452 (SSIK…WNSL) and 453 to 484 (GSAM…ALGI). Residues D466, N468, D470, R472, and E477 each contribute to the Ca(2+) site.

The sequence is that of EF-hand calcium-binding domain-containing protein 14 (Efcab14) from Mus musculus (Mouse).